We begin with the raw amino-acid sequence, 741 residues long: Ribosome-releasing factor 2, mitochondrial (741 aa).

The N-terminal 29 residues, 1-29 (MLKYEFLHGLQKRSHYLRQLSGQFFSRSY), are a transit peptide targeting the mitochondrion. The region spanning 31 to 310 (SKIRNIGILA…AVNSYLPAPE (280 aa)) is the tr-type G domain. GTP-binding positions include 40–47 (AHIDAGKT), 104–108 (DTPGH), and 158–161 (NKMD).

It belongs to the TRAFAC class translation factor GTPase superfamily. Classic translation factor GTPase family. EF-G/EF-2 subfamily.

Its subcellular location is the mitochondrion. Its function is as follows. Mitochondrial GTPase that mediates the disassembly of ribosomes from messenger RNA at the termination of mitochondrial protein biosynthesis. Not involved in the GTP-dependent ribosomal translocation step during translation elongation. The polypeptide is Ribosome-releasing factor 2, mitochondrial (Drosophila ananassae (Fruit fly)).